The following is a 258-amino-acid chain: MILVKLGGSVICGGGLDNVTNDVEPGTVLIHGGGCMVNSVMERMGVKPVILKHPNGYTSRYTDEETLKAYVMTMMLINKLIVSKLNARGIRAIGLSGVDLGLVTAKRKERVMIIDERGRTRVIDGGFSGRVTGVNVNIMNLMLSNSDVVVVSPIALSQEGLMLNVDGDQIAENIAISMNVKELVILTNVDGVLVNGKPIDKVTKANAQEILQYTTGGMRRKLETALKLTELGVRTIIANGLRDKPIRSALNGLGTVVE.

Substrate-binding positions include 33–34 (GG), Arg60, and Asn164.

This sequence belongs to the acetylglutamate kinase family. LysZ subfamily.

It localises to the cytoplasm. It carries out the reaction [amino-group carrier protein]-C-terminal-N-(1,4-dicarboxybutan-1-yl)-L-glutamine + ATP = [amino-group carrier protein]-C-terminal-N-(1-carboxy-5-phosphooxy-5-oxopentan-1-yl)-L-glutamine + ADP. It catalyses the reaction [amino-group carrier protein]-C-terminal-gamma-(L-glutamyl)-L-glutamate + ATP = [amino-group carrier protein]-C-terminal-gamma-(5-phospho-L-glutamyl)-L-glutamate + ADP. Its pathway is amino-acid biosynthesis; L-lysine biosynthesis via AAA pathway; L-lysine from L-alpha-aminoadipate (Thermus route): step 2/5. It participates in amino-acid biosynthesis; L-arginine biosynthesis. In terms of biological role, involved in both the arginine and lysine biosynthetic pathways. Phosphorylates the LysW-bound precursors glutamate (for arginine biosynthesis), respectively alpha-aminoadipate (for lysine biosynthesis). The sequence is that of Putative [LysW]-aminoadipate/[LysW]-glutamate kinase from Caldivirga maquilingensis (strain ATCC 700844 / DSM 13496 / JCM 10307 / IC-167).